Consider the following 280-residue polypeptide: 3-hydroxyacyl-thioester dehydratase X (280 aa).

The disordered stretch occupies residues 149-170 (QRTSLSGEPKPPPQKKPKLPPP). Positions 162–256 (QKKPKLPPPA…TAGLYVAEGD (95 aa)) constitute a MaoC-like domain.

The protein belongs to the enoyl-CoA hydratase/isomerase family.

The catalysed reaction is a (3R)-3-hydroxyacyl-CoA = a (2E)-enoyl-CoA + H2O. It carries out the reaction (2E)-octenoyl-CoA + H2O = (3R)-hydroxyoctanoyl-CoA. The enzyme catalyses (3R)-3-hydroxydodecanoyl-CoA = (2E)-dodecenoyl-CoA + H2O. It catalyses the reaction (3R)-hydroxyhexadecanoyl-CoA = (2E)-hexadecenoyl-CoA + H2O. The catalysed reaction is (3R)-hydroxyeicosanoyl-CoA = (2E)-eicosenoyl-CoA + H2O. It carries out the reaction (3R)-3-hydroxybutanoyl-CoA = (2E)-butenoyl-CoA + H2O. In terms of biological role, shows trans-enoyl-CoA hydratase/3-hydroxyacyl-CoA dehydratase activity. Displays a broad chain length specificity, with a predilection for the C8 to C12 substrates. This is 3-hydroxyacyl-thioester dehydratase X from Mycobacterium tuberculosis (strain ATCC 25618 / H37Rv).